The chain runs to 430 residues: Enolase (430 aa).

Glutamine 163 serves as a coordination point for (2R)-2-phosphoglycerate. Glutamate 205 functions as the Proton donor in the catalytic mechanism. 3 residues coordinate Mg(2+): aspartate 242, glutamate 287, and aspartate 314. Residues lysine 339, arginine 368, serine 369, and lysine 390 each contribute to the (2R)-2-phosphoglycerate site. Residue lysine 339 is the Proton acceptor of the active site.

It belongs to the enolase family. It depends on Mg(2+) as a cofactor.

Its subcellular location is the cytoplasm. It localises to the secreted. It is found in the cell surface. It carries out the reaction (2R)-2-phosphoglycerate = phosphoenolpyruvate + H2O. It participates in carbohydrate degradation; glycolysis; pyruvate from D-glyceraldehyde 3-phosphate: step 4/5. Its function is as follows. Catalyzes the reversible conversion of 2-phosphoglycerate (2-PG) into phosphoenolpyruvate (PEP). It is essential for the degradation of carbohydrates via glycolysis. The polypeptide is Enolase (Alkaliphilus metalliredigens (strain QYMF)).